The sequence spans 450 residues: Protein tweety homolog 1 (450 aa).

Over 1-43 the chain is Extracellular; that stretch reads MGAPPGYRPSAWVHLLHQLPRADFQLRPVPSGFAPQEQEYQQA. The chain crosses the membrane as a helical span at residues 44-64; that stretch reads LLLVAALAGLGLGLSLIFIAV. Over 65-88 the chain is Cytoplasmic; the sequence is YLIRFCCCRPPEPPGSKTPSPGGG. The chain crosses the membrane as a helical span at residues 89-109; sequence CVTWSCIVALLAGCIGIGIGF. The Extracellular segment spans residues 110–214; sequence YGNSETSDGV…DVSFVEEYRW (105 aa). An N-linked (GlcNAc...) asparagine glycan is attached at N130. Residues 215–235 form a helical membrane-spanning segment; sequence LAYVLLLLLELLVCLFTLLGL. Over 236-240 the chain is Cytoplasmic; that stretch reads AKQSK. The helical transmembrane segment at 241-261 threads the bilayer; sequence WLVIVMTVMSLLVLVLSWGSM. At 262–390 the chain is on the extracellular side; it reads GLEAATAVGL…LRGLCEDALE (129 aa). N-linked (GlcNAc...) asparagine glycosylation is found at N284 and N355. C303 and C370 form a disulfide bridge. Residues 391 to 411 form a helical membrane-spanning segment; it reads GLLFLLLFSLLSAGALATALC. Residues 412–450 are Cytoplasmic-facing; that stretch reads SLPRAWALFPPSDDYDDTDDDDPFNPQESKRFVQWQSSI. The interval 428–450 is disordered; the sequence is DTDDDDPFNPQESKRFVQWQSSI. Position 440 is a phosphoserine (S440).

The protein belongs to the tweety family. As to quaternary structure, homotetramer; disulfide-linked. Homodimer. In terms of processing, N-glycosylated. Contains high-mannose, hybrid and complex oligosaccharides.

Its subcellular location is the cell membrane. It carries out the reaction chloride(in) = chloride(out). The enzyme catalyses L-glutamate(out) = L-glutamate(in). In terms of biological role, calcium-independent, swelling-dependent volume-regulated anion channel (VRAC-swell) which plays a pivotal role in the process of regulatory volume decrease (RVD) in the brain through the efflux of anions like chloride and organic osmolytes like glutamate. In Macaca fascicularis (Crab-eating macaque), this protein is Protein tweety homolog 1 (TTYH1).